Here is a 238-residue protein sequence, read N- to C-terminus: Phosphatidylcholine synthase (238 aa).

Residues 1 to 16 (MPVNLSMTPINKAKAW) are Cytoplasmic-facing. Residues 17 to 37 (GVHAVTASGVILALLALLALV) traverse the membrane as a helical segment. Residues 38–41 (DNKP) lie on the Periplasmic side of the membrane. The chain crosses the membrane as a helical span at residues 42-62 (QACLLWLGLALLVDGLDGTLA). Residues 63–75 (RKYEVKEMLPHFD) lie on the Cytoplasmic side of the membrane. A helical transmembrane segment spans residues 76–96 (GSVLDLVIDYLTYVFIPAIFI). The Periplasmic portion of the chain corresponds to 97 to 104 (YRYIPLPE). The helical transmembrane segment at 105 to 125 (HFELLAVGVILVSSLFCFCNV) threads the bilayer. At 126 to 132 (NMKSTDN) the chain is on the cytoplasmic side. A helical membrane pass occupies residues 133 to 153 (YFVGFPAAWNVVAVYFYVLDL). The Periplasmic portion of the chain corresponds to 154 to 155 (HP). A helical transmembrane segment spans residues 156–176 (WVNLATVLVLAALTLTRMKFL). Residues 177–183 (HPFRVRQ) lie on the Cytoplasmic side of the membrane. A helical membrane pass occupies residues 184–204 (FMPLNIAVTFVWLISSGLLIV). Residues 205 to 209 (QQPAD) lie on the Periplasmic side of the membrane. The helical transmembrane segment at 210–230 (LPILLGLWFAASAYFVGICLW) threads the bilayer. Topologically, residues 231 to 238 (RSAREWFG) are cytoplasmic.

The protein belongs to the CDP-alcohol phosphatidyltransferase class-I family. It depends on Mn(2+) as a cofactor.

It is found in the cell inner membrane. The enzyme catalyses a CDP-1,2-diacyl-sn-glycerol + choline = a 1,2-diacyl-sn-glycero-3-phosphocholine + CMP + H(+). Its function is as follows. Condenses choline with CDP-diglyceride to produce phosphatidylcholine and CMP. This chain is Phosphatidylcholine synthase, found in Pseudomonas aeruginosa (strain ATCC 15692 / DSM 22644 / CIP 104116 / JCM 14847 / LMG 12228 / 1C / PRS 101 / PAO1).